A 437-amino-acid polypeptide reads, in one-letter code: Xylose isomerase (437 aa).

Active-site residues include His-101 and Asp-104. Residues Glu-232, Glu-268, His-271, Asp-296, Asp-307, Asp-309, and Asp-339 each coordinate Mg(2+).

Belongs to the xylose isomerase family. In terms of assembly, homotetramer. It depends on Mg(2+) as a cofactor.

It is found in the cytoplasm. The enzyme catalyses alpha-D-xylose = alpha-D-xylulofuranose. In Actinobacillus succinogenes (strain ATCC 55618 / DSM 22257 / CCUG 43843 / 130Z), this protein is Xylose isomerase.